A 737-amino-acid chain; its full sequence is MKEAKIENIDFGNALSERYLAYALSTIMSRSLPDVRDGLKPVHRRLLYAMLQLRLEPNSGYKKCARVVGDVIGKYHPHGDVAVYDTLVRLAQHFSLRYPLIDGQGNFGSIDGDNAAAMRYTESRMTEICTLLMVDIEKDTVDFRPTYDDSDLEPVIMPASFPNLLANGSEGIAVGMATNIPPHNLHELCDALVHLIDHPKAEISDMMNFIKGPDFPTGGIIIDKAELINAAYSTGRGSFRMRSRWEKEELSYGTYQIVVTEIPYQVQKSKLIEQIAILLKDKKIPLVSNIRDESTDIIRLVIEPRDRGCDPQIVMESLFKLTNLESRIQLNMNVIGSNNVPRVMNILEVLQEFLAHRQNIVTRRSTYLLNKIKHRLEILEGLRIAYLNLDEIIKIIREEDEPKAIMMERFKLTEIQVEAILNTRLRSLRKLEEQEIINEHSNLQKQQAILEEILNNPKELWKIVKKEIKAVQTKFGLNTVIGARRTSFEEVTLTNQVVDITAFITKEPITIICSKMGWVRSLKGHNTDLSTIKYKEGDAEKFIIEAYTTDKILIVSSEGRFFTLLADNISKGKGTGESIKLLVDIGNNDITNILVHKSDQLLLLASSIGKGFLVNSNEVMAQTKTGKQIMNVPDGHTCIACLPVNGDSIACIGESRKLLVFNIDEIPEMKKGQGVTLQKFKNAKLLDIKIFNKEDGLSWNNNGKVKLEKNIIAFLGKRGSTGKLPPMGFHKNNRFSS.

One can recognise a Topo IIA-type catalytic domain in the interval 32 to 496 (LPDVRDGLKP…SFEEVTLTNQ (465 aa)). The active-site O-(5'-phospho-DNA)-tyrosine intermediate is Tyr-120.

This sequence belongs to the type II topoisomerase GyrA/ParC subunit family. ParC type 1 subfamily. In terms of assembly, heterotetramer composed of ParC and ParE.

The protein resides in the cell membrane. It carries out the reaction ATP-dependent breakage, passage and rejoining of double-stranded DNA.. Its function is as follows. Topoisomerase IV is essential for chromosome segregation. It relaxes supercoiled DNA. Performs the decatenation events required during the replication of a circular DNA molecule. The protein is DNA topoisomerase 4 subunit A of Rickettsia felis (strain ATCC VR-1525 / URRWXCal2) (Rickettsia azadi).